A 365-amino-acid chain; its full sequence is Donuts protein 1 (365 aa).

Residues 28–49 (NSGLELPSQDYTNVEEKESSPK) form a disordered region. The 44-residue stretch at 82 to 125 (EKLCVLKELKIAFPEVDDTLIKAILIASQGVLEPAFNSLLYYSS) folds into the CUE domain. 2 disordered regions span residues 215-246 (HNTI…KGVN) and 286-335 (ESEE…YKSA). A compositionally biased stretch (basic and acidic residues) spans 224–244 (SILKGKEKGKEEEKEKGEEKG). Residues 286–295 (ESEEEEEQDV) show a composition bias toward acidic residues. The segment covering 315-331 (EAQRDSADRLPAKDDGG) has biased composition (basic and acidic residues).

In terms of assembly, may interact directly with ADY3. Probable component of a spindle pole body (SPB) complex composed of ADY3, SSP1, DON1, MPC54, SPO21/MPC70, NUD1 and CNM67.

The protein resides in the prospore membrane. Functionally, involved in the pathway that organizes the prospore membrane (PSM) during sporulation. The protein is Donuts protein 1 (DON1) of Saccharomyces cerevisiae (strain ATCC 204508 / S288c) (Baker's yeast).